The chain runs to 209 residues: Small ribosomal subunit protein uS4 (209 aa).

Residues S98 to K158 form the S4 RNA-binding domain.

This sequence belongs to the universal ribosomal protein uS4 family. In terms of assembly, part of the 30S ribosomal subunit. Contacts protein S5. The interaction surface between S4 and S5 is involved in control of translational fidelity.

One of the primary rRNA binding proteins, it binds directly to 16S rRNA where it nucleates assembly of the body of the 30S subunit. Its function is as follows. With S5 and S12 plays an important role in translational accuracy. The sequence is that of Small ribosomal subunit protein uS4 from Pseudothermotoga lettingae (strain ATCC BAA-301 / DSM 14385 / NBRC 107922 / TMO) (Thermotoga lettingae).